The chain runs to 373 residues: SWI/SNF-related matrix-associated actin-dependent regulator of chromatin subfamily B member 1-A (373 aa).

Residues 1–101 (MALSKTYGQK…DEKYKAVSIS (101 aa)) are DNA-binding.

The protein belongs to the SNF5 family. In terms of assembly, component of the multiprotein chromatin-remodeling complexes SWI/SNF. Component of neural progenitors-specific chromatin remodeling complex (npBAF complex) and the neuron-specific chromatin remodeling complex (nBAF complex). Component of the BAF (SWI/SNF) chromatin remodeling complex. Component of the SWI/SNF-B (PBAF) chromatin remodeling complex. Binds to double-stranded DNA.

The protein resides in the nucleus. Its function is as follows. Involved in chromatin-remodeling. Core component of the BAF (SWI/SNF) complex. This ATP-dependent chromatin-remodeling complex plays important roles in cell proliferation and differentiation, in cellular antiviral activities and inhibition of tumor formation. Belongs to the neural progenitors-specific chromatin remodeling complex (npBAF complex) and the neuron-specific chromatin remodeling complex (nBAF complex) and may play a role in neural development. The polypeptide is SWI/SNF-related matrix-associated actin-dependent regulator of chromatin subfamily B member 1-A (smarcb1a) (Danio rerio (Zebrafish)).